A 234-amino-acid chain; its full sequence is Covalently-linked cell wall protein 14 (234 aa).

An N-terminal signal peptide occupies residues 1–22; that stretch reads MASFLKISTLIAIVSTLQTTLA. One can recognise a CFEM domain in the interval 23-109; that stretch reads APPACLLACV…SSEESSASAS (87 aa). 4 disulfides stabilise this stretch: Cys-27–Cys-66, Cys-31–Cys-61, Cys-41–Cys-49, and Cys-51–Cys-82. Asp-46 serves as a coordination point for heme. Residues 86–207 are compositionally biased toward low complexity; the sequence is SSQSSSSESE…ASSSESTTAT (122 aa). A disordered region spans residues 86–208; sequence SSQSSSSESE…SSSESTTATG (123 aa). Gly-215 carries the GPI-anchor amidated glycine lipid modification. A propeptide spans 216–234 (removed in mature form); it reads SAAKVGLGALVGLVGAVLL.

It belongs to the CCW14 family. In terms of processing, the GPI-anchor is attached to the protein in the endoplasmic reticulum and serves to target the protein to the cell surface. There, the glucosamine-inositol phospholipid moiety is cleaved off and the GPI-modified mannoprotein is covalently attached via its lipidless GPI glycan remnant to the 1,6-beta-glucan of the outer cell wall layer.

The protein localises to the secreted. Its subcellular location is the cell wall. It localises to the membrane. Beta-glucan associated cell wall protein involved in cell wall structure. May serve as cross-linking or coat-forming wall protein. The chain is Covalently-linked cell wall protein 14 (SSR1) from Candida albicans (strain SC5314 / ATCC MYA-2876) (Yeast).